A 342-amino-acid polypeptide reads, in one-letter code: Protein-glutamate methylesterase/protein-glutamine glutaminase 4 (342 aa).

The region spanning 2-119 (NIGIVNDLPL…GGSADPSQPL (118 aa)) is the Response regulatory domain. Position 53 is a 4-aspartylphosphate (aspartate 53). The 194-residue stretch at 144-337 (PAPQGALPPL…DQLISLVQRN (194 aa)) folds into the CheB-type methylesterase domain. Catalysis depends on residues serine 159, histidine 186, and aspartate 279.

Belongs to the CheB family. Post-translationally, phosphorylated by CheA. Phosphorylation of the N-terminal regulatory domain activates the methylesterase activity.

It is found in the cytoplasm. The enzyme catalyses [protein]-L-glutamate 5-O-methyl ester + H2O = L-glutamyl-[protein] + methanol + H(+). It carries out the reaction L-glutaminyl-[protein] + H2O = L-glutamyl-[protein] + NH4(+). In terms of biological role, involved in chemotaxis. Part of a chemotaxis signal transduction system that modulates chemotaxis in response to various stimuli. Catalyzes the demethylation of specific methylglutamate residues introduced into the chemoreceptors (methyl-accepting chemotaxis proteins or MCP) by CheR. Also mediates the irreversible deamidation of specific glutamine residues to glutamic acid. The chain is Protein-glutamate methylesterase/protein-glutamine glutaminase 4 from Burkholderia thailandensis (strain ATCC 700388 / DSM 13276 / CCUG 48851 / CIP 106301 / E264).